Consider the following 997-residue polypeptide: Serine-repeat antigen protein 5 (997 aa).

The signal sequence occupies residues 1–22 (MKSYISLFFILCVIFNKNVIKC). Disordered stretches follow at residues 26–107 (SQTG…EKQD) and 181–252 (LPSN…PRNL). The span at 30-51 (NTGGGQAGNTGGDQAGSTGGSP) shows a compositional bias: gly residues. Positions 52-67 (QGSTGASPQGSTGASP) are enriched in low complexity. Residues 68–84 (QGSTGASQPGSSEPSNP) are compositionally biased toward polar residues. Low complexity-rich tracts occupy residues 85-103 (VSSG…STSS), 183-196 (SNGT…STGT), and 205-235 (SDSS…SSES). At serine 183 the chain carries Phosphoserine. N-linked (GlcNAc...) asparagine glycosylation occurs at asparagine 184. Residues 216 to 253 (SSSSSSSSSSSSSSSSSSESLPANGPDSPTVKPPRNLQ) are interaction with PTKL. A glycan (N-linked (GlcNAc...) asparagine) is linked at asparagine 318. An interaction with host VTN region spans residues 373-390 (YKYLSEDIVSKFKEIKAE). Cysteine 445 and cysteine 497 are oxidised to a cystine. Threonine 549 is subject to Phosphothreonine; by CPK1. Intrachain disulfides connect cysteine 567-cysteine 572, cysteine 581-cysteine 610, cysteine 593-cysteine 636, cysteine 627-cysteine 672, and cysteine 755-cysteine 809. Positions 579–997 (NNCISNLQVE…TNNECYFCYV (419 aa)) are thiol-protease-like. Active-site residues include histidine 762 and asparagine 787. Asparagine 828 carries an N-linked (GlcNAc...) asparagine glycan. Residues 843–886 (KASPEFYHNLYFKNFNVGKKNLFSEKEDNENNKKLGNNYIIFGQ) constitute a propeptide, inhibition peptide. A Phosphoserine modification is found at serine 866.

The protein belongs to the peptidase C1 family. In terms of assembly, may interact (via C-terminus) with PTKL (via SAM domain). As to quaternary structure, interacts (via C-terminus) with human VTN (via hemopexin repeat 2); may form heterotetramers of two VTN and SERA5 P47 heterodimers; the interaction may protect merozoites from phagocytosis by host monocytes; VTN glycosylation appears to be dispensable for the interaction. Monomer. Interacts with kinase CPK1/CDPK1 at the schizont stage. Post-translationally, phosphorylation by CPK1/CDPK1 increases SERA5 protease activity towards a synthetic peptide in vitro. Just prior to merozoite egress from host erythrocytes, proteolytically cleaved into multiple fragments. Cleaved by SUB1 into p47 and p73, p73 is further cleaved by SUB1 into p56 and p18 and p56 is further processed into p50 by an unidentified protease. p47 remains covalently associated with p18 via disulfide bond. p47 can be processed into p25n and p25c by SUB1. p25c and p25n remain associated with p18. Proteolytic processing is essential for merozoite egress from host erythrocytes. The cleavage of the propeptide to produce p50 is necessary for protease activity and to promote merozoite egress.

The protein localises to the parasitophorous vacuole. It is found in the secreted. The protein resides in the cell membrane. Functionally, plays an essential role during the asexual blood stage development by controlling the kinetics of merozoite egress from host erythrocytes. Specifically, prevents premature rupture of the parasitophorous vacuole and host erythrocyte membranes. May prevent merozoite phagocytosis by host monocytes via interaction with host VTN at the merozoite surface. Plays a role in parasite growth. In terms of biological role, protease activity is controversial. Has been shown in a number of studies to have protease activity towards a synthetic peptide in vitro. Has also been shown to lack protease activity towards a synthetic peptide in vitro. In Plasmodium falciparum (isolate 3D7), this protein is Serine-repeat antigen protein 5.